The chain runs to 1141 residues: MAAAVGVRGRYELPPCSGPGWLLSLSALLSVAARGAFATTHWVVTEDGKIQQQVDSPMNLKHPHDLVILMRQEATVNYLKELEKQLVAQKIHIEENEDRDTGLEQRHNKEDPDCIKAKVPLGDLDLYDGTYITLESKDISPEDYIDTESPVPPDPEQPDCTKILELPYSIHAFQHLRGVQERVNLSAPLLPKEDPIFTYLSKRLGRSIDDIGHLIHEGLQKNTSSWVLYNMASFYWRIKNEPYQVVECAMRALHFSSRHNKDIALVNLANVLHRAHFSADAAVVVHAALDDSDFFTSYYTLGNIYAMLGEYNHSVLCYDHALQARPGFEQAIKRKHAVLCQQKLEQKLEAQHRSLQRTLNELKEYQKQHDHYLRQQEILEKHKLIQEEQILRNIIHETQMAKEAQLGNHQICRLVNQQHSLHCQWDQPVRYHRGDIFENVDYVQFGEDSSTSSMMSVNFDVQSNQSDINDSVKSSPVAHSILWIWGRDSDAYRDKQHILWPKRADCTESYPRVPVGGELPTYFLPPENKGLRIHELSSDDYSTEEEAQTPDCSITDFRKSHTLSYLVKELEVRMDLKAKMPDDHARKILLSRINNYTIPEEEIGSFLFHAINKPNAPIWLILNEAGLYWRAVGNSTFAIACLQRALNLAPLQYQDVPLVNLANLLIHYGLHLDATKLLLQALAINSSEPLTFLSLGNAYLALKNISGALEAFRQALKLTTKCPECENSLKLIRCMQFYPFLYNITSSVCSGTVVEESNGSDEMENSDETKMSEEILALVDEFQQAWPLEGFGGALEMKGRRLDLQGIRVLKKGPQDGVARSSCYGDCRSEDDEATEWITFQVKRVKKPKGDHKKTPGKKVETGQIENGHRYQANLEITGPKVASPGPQGKKRDYQRLGWPSPDECLKLRWVELTAIVSTWLAVSSKNIDITEHIDFATPIQQPAMEPLCNGNLPTSMHTLDHLHGVSNRASLHYTGESQLTEVLQNLGKDQYPQQSLEQIGTRIAKVLEKNQTSWVLSSMAALYWRVKGQGKKAIDCLRQALHYAPHQMKDVPLISLANILHNAKLWNDAVIVATMAVEIAPHFAVNHFTLGNVYVAMEEFEKALVWYESTLKLQPEFVPAKNRIQTIQCHLMLKKGRRSP.

One copy of the TPR 1 repeat lies at 295–328 (FTSYYTLGNIYAMLGEYNHSVLCYDHALQARPGF). Residues 340-382 (CQQKLEQKLEAQHRSLQRTLNELKEYQKQHDHYLRQQEILEKH) adopt a coiled-coil conformation. 5 TPR repeats span residues 619–652 (WLIL…APLQ), 689–722 (PLTF…TTKC), 1014–1048 (SWVL…APHQ), 1051–1084 (DVPL…APHF), and 1085–1118 (AVNH…QPEF).

It belongs to the TTC17 family. Interacts with CATIP. Expressed in germ cells as well as in somatic cells of the testis (at protein level).

Its subcellular location is the cytoplasm. It localises to the cell membrane. The protein localises to the cytoskeleton. Its function is as follows. Plays a role in primary ciliogenesis by modulating actin polymerization. In Homo sapiens (Human), this protein is Tetratricopeptide repeat protein 17 (TTC17).